Reading from the N-terminus, the 366-residue chain is Flagellar P-ring protein (366 aa).

The first 24 residues, 1 to 24 (MWPLLLAVALSTLLPLAMPGSAGA), serve as a signal peptide directing secretion.

This sequence belongs to the FlgI family. In terms of assembly, the basal body constitutes a major portion of the flagellar organelle and consists of four rings (L,P,S, and M) mounted on a central rod.

The protein resides in the periplasm. Its subcellular location is the bacterial flagellum basal body. Functionally, assembles around the rod to form the L-ring and probably protects the motor/basal body from shearing forces during rotation. The chain is Flagellar P-ring protein from Nitratidesulfovibrio vulgaris (strain ATCC 29579 / DSM 644 / CCUG 34227 / NCIMB 8303 / VKM B-1760 / Hildenborough) (Desulfovibrio vulgaris).